The primary structure comprises 487 residues: MAQIYAQTLTETAAALAQGTLTAEEAVRACIDRIEATEPAVHALLATRCEEALAEARAMDAAGYDPAKPLWGVPVTVKDVLSTSGVATTCGSRILENYVPFFDAAAVSRLKDAGAVILAKTNMDEFAMGSSTEKSAFKTTHNPWDLQRVPGGSSGGSAASVAAGQCFASLGTDTGGSVRQPASFCGCVGLKPTYGRVSRYGLVAYGSSLDQIGPVTRSVEDAARVLAVIAGHDARDTTCSDRPVDDYLAALGSRSDLAGLRIGVPAEYWGEGLSGEVDSCCREALKKAEELGATLVDISLPNSRHAIAVYYIVAMAEASSNLARFDGVRFGHRSDNAASLPELYINSRSEGFGDEVQRRIMLGTYVLSSGYYDAYYRKAAQVRRLILQDFEKAFEQCDVICGPASPVTAWKHGAMSGDPLTMYLLDIFTISLNLAGLPGLSLPVGTGTESGMPVGLQILGKAFDEATLLSVAHVLEQRIGRTPVAQI.

Residues lysine 78 and serine 153 each act as charge relay system in the active site. Residue serine 177 is the Acyl-ester intermediate of the active site.

It belongs to the amidase family. GatA subfamily. As to quaternary structure, heterotrimer of A, B and C subunits.

It carries out the reaction L-glutamyl-tRNA(Gln) + L-glutamine + ATP + H2O = L-glutaminyl-tRNA(Gln) + L-glutamate + ADP + phosphate + H(+). Its function is as follows. Allows the formation of correctly charged Gln-tRNA(Gln) through the transamidation of misacylated Glu-tRNA(Gln) in organisms which lack glutaminyl-tRNA synthetase. The reaction takes place in the presence of glutamine and ATP through an activated gamma-phospho-Glu-tRNA(Gln). The chain is Glutamyl-tRNA(Gln) amidotransferase subunit A from Oleidesulfovibrio alaskensis (strain ATCC BAA-1058 / DSM 17464 / G20) (Desulfovibrio alaskensis).